Consider the following 130-residue polypeptide: Peptide methionine sulfoxide reductase MsrB (130 aa).

The 123-residue stretch at 8-130 (LEEWRSMLDP…NSVCLDLVPR (123 aa)) folds into the MsrB domain. Cys47, Cys50, Cys96, and Cys99 together coordinate Zn(2+). The active-site Nucleophile is the Cys119.

This sequence belongs to the MsrB Met sulfoxide reductase family. Requires Zn(2+) as cofactor.

The enzyme catalyses L-methionyl-[protein] + [thioredoxin]-disulfide + H2O = L-methionyl-(R)-S-oxide-[protein] + [thioredoxin]-dithiol. The polypeptide is Peptide methionine sulfoxide reductase MsrB (Pseudomonas fluorescens (strain ATCC BAA-477 / NRRL B-23932 / Pf-5)).